Reading from the N-terminus, the 375-residue chain is MQCALYDAGRCRSCQWITQPIPEQLSAKTADLKNLLADFPVEEWCAPVSGPEQGFRNKAKMVVSGSVEKPLLGMLHRDGTPEDLCDCPLYPASFAPVFAALKPFIARAGLTPYNVARKRGELKYILLTESQSDGGMMLRFVLRSETKLAQLRKALPWLQEQLPQLKVITVNIQPVHMAIMEGETEIYLTEQQALAERFNDVPLWIRPQSFFQTNPAVASQLYATARDWVRQLPVKHMWDLFCGVGGFGLHCATPDMQLTGIEIASEAIACAKQSAAELGLTRLQFQALDSTQFATAQGDVPELVLVNPPRRGIGKPLCDYLSTMAPRFIIYSSCNAQTMAKDIRELPGYRIERVQLFDMFPHTAHYEVMTLLVKQ.

Residues cysteine 3, cysteine 11, cysteine 14, and cysteine 87 each coordinate [4Fe-4S] cluster. Residues glutamine 212, phenylalanine 241, glutamate 262, and asparagine 307 each contribute to the S-adenosyl-L-methionine site. The active-site Nucleophile is the cysteine 334.

This sequence belongs to the class I-like SAM-binding methyltransferase superfamily. RNA M5U methyltransferase family. RlmC subfamily.

The catalysed reaction is uridine(747) in 23S rRNA + S-adenosyl-L-methionine = 5-methyluridine(747) in 23S rRNA + S-adenosyl-L-homocysteine + H(+). Catalyzes the formation of 5-methyl-uridine at position 747 (m5U747) in 23S rRNA. This is 23S rRNA (uracil(747)-C(5))-methyltransferase RlmC from Shigella sonnei (strain Ss046).